A 419-amino-acid polypeptide reads, in one-letter code: MIVTYGTVGCPVSRGGSPGCGRRIAEELRLAEDARLRLALLGRCIVKGSPAQARGELRAELKAIDATIELRKELDAIDAEWAPKIELSAELRAIDAEWRPAIRLRSAYRAIIGRIELRKELDAIDAEWAPKIELSAELKAIDAEWRPAIRLRSAYRAIIGRWELSKELKAIDAEWRPAIARESLRKELDAIDAEWQHAITFWHISRAIIGSIELSKELKAIDAKWKYVAIYERQKAQRRREERAAKAREELRKELNDIDAKWKSASAIKLRKDLRSTSEGVDHTEFALELRATDKSGNMELVLKLKATDTKNQHDAIVKAIEDGFVGYAAECGAATRELNACGGMSTTSAPSTDLISTVVSAVTTGTGQQQSAGSESQRPTECGGGGTLLSSLFALILPSSNWYCNAVLYGGFLGCLGS.

A signal peptide spans 1-39 (MIVTYGTVGCPVSRGGSPGCGRRIAEELRLAEDARLRLA). A coiled-coil region spans residues 232–262 (ERQKAQRRREERAAKAREELRKELNDIDAKW).

Its subcellular location is the secreted. In terms of biological role, associates with actin filament appendages that are formed in the inclusion appendages of the parasitophorous vacuole during infection of the host erythrocyte. The sequence is that of Appendage-associated protein from Anaplasma marginale (strain St. Maries).